Consider the following 157-residue polypeptide: SsrA-binding protein (157 aa).

The disordered stretch occupies residues 132-157; that stretch reads VHDKRQAQKDKDWAREKDRLFKKAYK. Residues 135–157 are compositionally biased toward basic and acidic residues; sequence KRQAQKDKDWAREKDRLFKKAYK.

This sequence belongs to the SmpB family.

It localises to the cytoplasm. Functionally, required for rescue of stalled ribosomes mediated by trans-translation. Binds to transfer-messenger RNA (tmRNA), required for stable association of tmRNA with ribosomes. tmRNA and SmpB together mimic tRNA shape, replacing the anticodon stem-loop with SmpB. tmRNA is encoded by the ssrA gene; the 2 termini fold to resemble tRNA(Ala) and it encodes a 'tag peptide', a short internal open reading frame. During trans-translation Ala-aminoacylated tmRNA acts like a tRNA, entering the A-site of stalled ribosomes, displacing the stalled mRNA. The ribosome then switches to translate the ORF on the tmRNA; the nascent peptide is terminated with the 'tag peptide' encoded by the tmRNA and targeted for degradation. The ribosome is freed to recommence translation, which seems to be the essential function of trans-translation. In Francisella tularensis subsp. tularensis (strain FSC 198), this protein is SsrA-binding protein.